The sequence spans 1411 residues: DNA-directed RNA polymerase subunit beta' (1411 aa).

The Zn(2+) site is built by Cys69, Cys71, Cys84, and Cys87. Mg(2+) is bound by residues Asp461, Asp463, and Asp465. Residues Cys809, Cys883, Cys890, and Cys893 each coordinate Zn(2+).

It belongs to the RNA polymerase beta' chain family. The RNAP catalytic core consists of 2 alpha, 1 beta, 1 beta' and 1 omega subunit. When a sigma factor is associated with the core the holoenzyme is formed, which can initiate transcription. Requires Mg(2+) as cofactor. The cofactor is Zn(2+).

The catalysed reaction is RNA(n) + a ribonucleoside 5'-triphosphate = RNA(n+1) + diphosphate. In terms of biological role, DNA-dependent RNA polymerase catalyzes the transcription of DNA into RNA using the four ribonucleoside triphosphates as substrates. The sequence is that of DNA-directed RNA polymerase subunit beta' from Ehrlichia ruminantium (strain Gardel).